We begin with the raw amino-acid sequence, 690 residues long: Eukaryotic translation initiation factor 3 subunit B (690 aa).

Residues 1–37 (MAKKKSEEQSSADANDSDYQEEPNFEDPPGFVDNISD) form a disordered region. Positions 15 to 25 (NDSDYQEEPNF) are enriched in acidic residues. Positions 57 to 141 (SVVVVDNIPK…HTFAVNLFTD (85 aa)) constitute an RRM domain. WD repeat units follow at residues 207 to 246 (TRER…KIQK), 293 to 331 (DGMS…LLDL), 334 to 369 (IKIP…TLME), 442 to 484 (EIRE…KPSL), and 530 to 575 (PDHF…IKRT). A coiled-coil region spans residues 595–645 (EEKQKEIKKNLKKYYAAFEQKDRLRLTRASKELLEKRSQLRETFMEYRNKR).

It belongs to the eIF-3 subunit B family. As to quaternary structure, component of the eukaryotic translation initiation factor 3 (eIF-3) complex. The eIF-3 complex interacts with pix. Interacts with mxt.

The protein localises to the cytoplasm. Its function is as follows. RNA-binding component of the eukaryotic translation initiation factor 3 (eIF-3) complex, which is involved in protein synthesis of a specialized repertoire of mRNAs and, together with other initiation factors, stimulates binding of mRNA and methionyl-tRNAi to the 40S ribosome. The eIF-3 complex specifically targets and initiates translation of a subset of mRNAs involved in cell proliferation. This chain is Eukaryotic translation initiation factor 3 subunit B, found in Drosophila sechellia (Fruit fly).